Reading from the N-terminus, the 649-residue chain is Macrolide export ATP-binding/permease protein MacB (649 aa).

Residues 7 to 245 (IELKNIVRRY…SSAQEVTPQL (239 aa)) enclose the ABC transporter domain. 43–50 (GASGSGKS) is a binding site for ATP. The next 4 membrane-spanning stretches (helical) occupy residues 276 to 296 (LLTM…IALG), 529 to 549 (IAFI…LVSV), 582 to 602 (LLGG…FSAF), and 612 to 632 (FSSF…FGYF).

Belongs to the ABC transporter superfamily. Macrolide exporter (TC 3.A.1.122) family. As to quaternary structure, homodimer. Part of the tripartite efflux system MacAB-TolC, which is composed of an inner membrane transporter, MacB, a periplasmic membrane fusion protein, MacA, and an outer membrane component, TolC. The complex forms a large protein conduit and can translocate molecules across both the inner and outer membranes. Interacts with MacA.

The protein localises to the cell inner membrane. Functionally, part of the tripartite efflux system MacAB-TolC. MacB is a non-canonical ABC transporter that contains transmembrane domains (TMD), which form a pore in the inner membrane, and an ATP-binding domain (NBD), which is responsible for energy generation. Confers resistance against macrolides. The polypeptide is Macrolide export ATP-binding/permease protein MacB (Pasteurella multocida (strain Pm70)).